Consider the following 420-residue polypeptide: Serine--tRNA ligase (420 aa).

225-227 (TLE) serves as a coordination point for L-serine. 256–258 (RQE) provides a ligand contact to ATP. E279 is an L-serine binding site. ATP is bound at residue 343–346 (EVSS). T379 contributes to the L-serine binding site.

The protein belongs to the class-II aminoacyl-tRNA synthetase family. Type-1 seryl-tRNA synthetase subfamily. In terms of assembly, homodimer. The tRNA molecule binds across the dimer.

It localises to the cytoplasm. The enzyme catalyses tRNA(Ser) + L-serine + ATP = L-seryl-tRNA(Ser) + AMP + diphosphate + H(+). The catalysed reaction is tRNA(Sec) + L-serine + ATP = L-seryl-tRNA(Sec) + AMP + diphosphate + H(+). It functions in the pathway aminoacyl-tRNA biosynthesis; selenocysteinyl-tRNA(Sec) biosynthesis; L-seryl-tRNA(Sec) from L-serine and tRNA(Sec): step 1/1. Functionally, catalyzes the attachment of serine to tRNA(Ser). Is also able to aminoacylate tRNA(Sec) with serine, to form the misacylated tRNA L-seryl-tRNA(Sec), which will be further converted into selenocysteinyl-tRNA(Sec). This is Serine--tRNA ligase from Mycoplasma pneumoniae (strain ATCC 29342 / M129 / Subtype 1) (Mycoplasmoides pneumoniae).